A 426-amino-acid chain; its full sequence is Glutamate-1-semialdehyde 2,1-aminomutase (426 aa).

At lysine 265 the chain carries N6-(pyridoxal phosphate)lysine.

Belongs to the class-III pyridoxal-phosphate-dependent aminotransferase family. HemL subfamily. Homodimer. It depends on pyridoxal 5'-phosphate as a cofactor.

Its subcellular location is the cytoplasm. The enzyme catalyses (S)-4-amino-5-oxopentanoate = 5-aminolevulinate. The protein operates within porphyrin-containing compound metabolism; protoporphyrin-IX biosynthesis; 5-aminolevulinate from L-glutamyl-tRNA(Glu): step 2/2. In Actinobacillus pleuropneumoniae serotype 7 (strain AP76), this protein is Glutamate-1-semialdehyde 2,1-aminomutase.